The chain runs to 107 residues: MSISLSESAAQRVSAFIANRGKGLGLRLGVRTSGCSGMAYVLEFVDDLNDGDTVFEDKGIKVIVDGKSLVYLDGTELDFVKEGLNEGFKFNNPNSSGECGCGESFNV.

Fe cation is bound by residues cysteine 35, cysteine 99, and cysteine 101.

Belongs to the HesB/IscA family. As to quaternary structure, homodimer; may form tetramers and higher multimers. Requires Fe cation as cofactor.

Functionally, is able to transfer iron-sulfur clusters to apo-ferredoxin. Multiple cycles of [2Fe2S] cluster formation and transfer are observed, suggesting that IscA acts catalytically. Recruits intracellular free iron so as to provide iron for the assembly of transient iron-sulfur cluster in IscU in the presence of IscS, L-cysteine and the thioredoxin reductase system TrxA/TrxB. The protein is Iron-binding protein IscA of Pectobacterium carotovorum subsp. carotovorum (strain PC1).